The sequence spans 107 residues: Putative double-stranded DNA mimic protein ECA2319 (107 aa).

This sequence belongs to the putative dsDNA mimic protein family.

Its function is as follows. May act as a double-stranded DNA (dsDNA) mimic. Probably regulates the activity of a dsDNA-binding protein. This is Putative double-stranded DNA mimic protein ECA2319 from Pectobacterium atrosepticum (strain SCRI 1043 / ATCC BAA-672) (Erwinia carotovora subsp. atroseptica).